The primary structure comprises 374 residues: UDP-N-acetylglucosamine--N-acetylmuramyl-(pentapeptide) pyrophosphoryl-undecaprenol N-acetylglucosamine transferase (374 aa).

UDP-N-acetyl-alpha-D-glucosamine contacts are provided by residues T13 to G15, N124, R165, S193, and Q294.

It belongs to the glycosyltransferase 28 family. MurG subfamily.

The protein resides in the cell inner membrane. It catalyses the reaction di-trans,octa-cis-undecaprenyl diphospho-N-acetyl-alpha-D-muramoyl-L-alanyl-D-glutamyl-meso-2,6-diaminopimeloyl-D-alanyl-D-alanine + UDP-N-acetyl-alpha-D-glucosamine = di-trans,octa-cis-undecaprenyl diphospho-[N-acetyl-alpha-D-glucosaminyl-(1-&gt;4)]-N-acetyl-alpha-D-muramoyl-L-alanyl-D-glutamyl-meso-2,6-diaminopimeloyl-D-alanyl-D-alanine + UDP + H(+). It functions in the pathway cell wall biogenesis; peptidoglycan biosynthesis. In terms of biological role, cell wall formation. Catalyzes the transfer of a GlcNAc subunit on undecaprenyl-pyrophosphoryl-MurNAc-pentapeptide (lipid intermediate I) to form undecaprenyl-pyrophosphoryl-MurNAc-(pentapeptide)GlcNAc (lipid intermediate II). In Sinorhizobium medicae (strain WSM419) (Ensifer medicae), this protein is UDP-N-acetylglucosamine--N-acetylmuramyl-(pentapeptide) pyrophosphoryl-undecaprenol N-acetylglucosamine transferase.